The primary structure comprises 655 residues: MAAIESVLTETRVFPPAEAFVTQANVAGMEAYQALCRRAEADYEGFWAELARQHIDWKTPFTRTLDESDAPFYRWFDDGELNVSYNCLDRHLATRGDKTALIFEADDGSVRTVTYKELHARVCQFANGLKSLGVGKGDRVIVYMPMSIEAVVAMQACARIGAIHSVVFGGFSAKSLFERIEDAQAKLIVTADESLRGGKAVPLKRAADEALAMGDTSCVERVVVYRRSGGEVNWSARDLWWHELTQTQAETCEPVWVSAEHPLFILYTSGSTGKPKGVQHSTGGYLLGALLSMLWVFDAKADNDVYWCTADVGWITGHTYVAYGPLALGMTEVIFEGIPTYPHAGRFWETIAKHKVTTFYTAPTAIRSLIKLGSELPAQYDLSSLRLLGTVGEPINPEAWMWYHEVIGGGRCPIVDTWWQTETGAHMIAPLPGAVPTKPGSCTLPLPGIMAAVTDEHGGPVAKGQGGYLVIKRPFPSQLRTLWGDPERFKKTYFPEEMGGKTYLAGDSAHRDDDGYFWIMGRIDDVLNVSGHRLGTMEIESALVSNPRVAEAAVVGRPHEVKGEAVVAYVVLKGARAVGDEAKDIARELRDWVGKEIGPIAKPDEIRFGENLPKTRSGKIMRRLLRAIAKGEEITQDVSTLENPAILDQLKEAVK.

Residues 196-199 (RGGK) and T316 contribute to the CoA site. ATP contacts are provided by residues 392-394 (GEP), 416-421 (DTWWQT), D507, and R522. Residue S530 coordinates CoA. R533 is an ATP binding site. Positions 544 and 549 each coordinate Mg(2+). K619 is subject to N6-acetyllysine.

The protein belongs to the ATP-dependent AMP-binding enzyme family. Mg(2+) is required as a cofactor. In terms of processing, acetylated. Deacetylation by the SIR2-homolog deacetylase activates the enzyme.

It catalyses the reaction acetate + ATP + CoA = acetyl-CoA + AMP + diphosphate. Functionally, catalyzes the conversion of acetate into acetyl-CoA (AcCoA), an essential intermediate at the junction of anabolic and catabolic pathways. AcsA undergoes a two-step reaction. In the first half reaction, AcsA combines acetate with ATP to form acetyl-adenylate (AcAMP) intermediate. In the second half reaction, it can then transfer the acetyl group from AcAMP to the sulfhydryl group of CoA, forming the product AcCoA. In Thiobacillus denitrificans (strain ATCC 25259 / T1), this protein is Acetyl-coenzyme A synthetase.